Here is a 373-residue protein sequence, read N- to C-terminus: UDP-N-acetylglucosamine--N-acetylmuramyl-(pentapeptide) pyrophosphoryl-undecaprenol N-acetylglucosamine transferase (373 aa).

Residues 16–18, asparagine 128, arginine 164, serine 192, isoleucine 250, and glutamine 295 contribute to the UDP-N-acetyl-alpha-D-glucosamine site; that span reads TGG.

It belongs to the glycosyltransferase 28 family. MurG subfamily.

It localises to the cell inner membrane. The catalysed reaction is di-trans,octa-cis-undecaprenyl diphospho-N-acetyl-alpha-D-muramoyl-L-alanyl-D-glutamyl-meso-2,6-diaminopimeloyl-D-alanyl-D-alanine + UDP-N-acetyl-alpha-D-glucosamine = di-trans,octa-cis-undecaprenyl diphospho-[N-acetyl-alpha-D-glucosaminyl-(1-&gt;4)]-N-acetyl-alpha-D-muramoyl-L-alanyl-D-glutamyl-meso-2,6-diaminopimeloyl-D-alanyl-D-alanine + UDP + H(+). Its pathway is cell wall biogenesis; peptidoglycan biosynthesis. Cell wall formation. Catalyzes the transfer of a GlcNAc subunit on undecaprenyl-pyrophosphoryl-MurNAc-pentapeptide (lipid intermediate I) to form undecaprenyl-pyrophosphoryl-MurNAc-(pentapeptide)GlcNAc (lipid intermediate II). The sequence is that of UDP-N-acetylglucosamine--N-acetylmuramyl-(pentapeptide) pyrophosphoryl-undecaprenol N-acetylglucosamine transferase from Paraburkholderia phymatum (strain DSM 17167 / CIP 108236 / LMG 21445 / STM815) (Burkholderia phymatum).